We begin with the raw amino-acid sequence, 582 residues long: Semenogelin-2 (582 aa).

The N-terminal stretch at 1–23 (MKSIILFVLSLLLILEKQAAVMG) is a signal peptide. 6 disordered regions span residues 26–65 (CGSK…SFSI), 132–159 (GGQA…SSQY), 272–295 (NLNQ…RTEE), 318–358 (TEEK…ERHL), 379–417 (EEQI…EERR), and 439–582 (EEQI…PVST). Polar residues-rich tracts occupy residues 31-40 (QLPSGSSQFP) and 137-159 (RGTQ…SSQY). Over residues 325–335 (KSQNQVTIHSQ) the composition is skewed to polar residues. Residues 336 to 345 (GQEHGHKENK) show a composition bias toward basic and acidic residues. Polar residues-rich tracts occupy residues 379 to 397 (EEQI…SQAQ), 439 to 457 (EEQI…SQAQ), 487 to 496 (KDVSQSSTSF), and 506 to 524 (SQIQ…QNAK). Composition is skewed to basic and acidic residues over residues 525 to 552 (GKSD…ESSE) and 559 to 582 (TEHE…PVST).

It belongs to the semenogelin family. Interacts with SERPINA5.

It is found in the secreted. Functionally, participates in the formation of a gel matrix (sperm coagulum) entrapping the accessory gland secretions and ejaculated spermatozoa. The sequence is that of Semenogelin-2 (SEMG2) from Hylobates lar (Lar gibbon).